Consider the following 625-residue polypeptide: Vicilin-like antimicrobial peptides 2-3 (625 aa).

Disordered stretches follow at residues 120–152 and 180–212; these read QQKR…QQRE and RQHG…NPYY. Positions 198–212 are enriched in basic and acidic residues; it reads RYEEGEEKQSDNPYY. Cupin type-1 domains lie at 230-369 and 414-584; these read SVLE…ERLR and YNLF…KEVE. Positions 594 to 614 are disordered; it reads IFFPGPRQHQQQSPRSTKQQQ. Residues 601–614 show a composition bias toward low complexity; that stretch reads QHQQQSPRSTKQQQ.

The protein belongs to the 7S seed storage protein family.

It is found in the secreted. Its function is as follows. Antimicrobial peptides 2b, 2c and 2d have antibacterial and antifungal activity against a range of species. This is Vicilin-like antimicrobial peptides 2-3 from Macadamia integrifolia (Macadamia nut).